Consider the following 164-residue polypeptide: Thiol peroxidase (164 aa).

The Thioredoxin domain maps to 18–163; that stretch reads VKTGETAPEF…FESALEAYRN (146 aa). Cys-60 functions as the Cysteine sulfenic acid (-SOH) intermediate in the catalytic mechanism. Cys-60 and Cys-93 form a disulfide bridge.

It belongs to the peroxiredoxin family. Tpx subfamily. Homodimer.

The catalysed reaction is a hydroperoxide + [thioredoxin]-dithiol = an alcohol + [thioredoxin]-disulfide + H2O. In terms of biological role, thiol-specific peroxidase that catalyzes the reduction of hydrogen peroxide and organic hydroperoxides to water and alcohols, respectively. Plays a role in cell protection against oxidative stress by detoxifying peroxides. This Staphylococcus saprophyticus subsp. saprophyticus (strain ATCC 15305 / DSM 20229 / NCIMB 8711 / NCTC 7292 / S-41) protein is Thiol peroxidase.